The sequence spans 67 residues: DNA-directed RNA polymerase subunit omega (67 aa).

The protein belongs to the RNA polymerase subunit omega family. As to quaternary structure, the RNAP catalytic core consists of 2 alpha, 1 beta, 1 beta' and 1 omega subunit. When a sigma factor is associated with the core the holoenzyme is formed, which can initiate transcription.

It catalyses the reaction RNA(n) + a ribonucleoside 5'-triphosphate = RNA(n+1) + diphosphate. Promotes RNA polymerase assembly. Latches the N- and C-terminal regions of the beta' subunit thereby facilitating its interaction with the beta and alpha subunits. The protein is DNA-directed RNA polymerase subunit omega of Burkholderia pseudomallei (strain 1106a).